The following is a 247-amino-acid chain: 2-dehydro-3-deoxy-phosphogluconate aldolase (247 aa).

The protein belongs to the DagF family.

It catalyses the reaction 2-dehydro-3-deoxy-6-phospho-D-gluconate = D-glyceraldehyde 3-phosphate + pyruvate. Its function is as follows. Involved in the catabolism of D-glucosaminate. Catalyzes the conversion of keto-3-deoxygluconate 6-phosphate (KDGP) to yield pyruvate and glyceraldehyde-3-phosphate. In Salmonella typhimurium (strain 14028s / SGSC 2262), this protein is 2-dehydro-3-deoxy-phosphogluconate aldolase.